A 584-amino-acid chain; its full sequence is Transcription factor 7-like 1 (584 aa).

Residues 1–28 show a composition bias toward gly residues; that stretch reads MPQLGGGRGGAGGGGGGSGAGATSGGDD. Positions 1–71 are CTNNB1-binding; that stretch reads MPQLGGGRGG…VKSSLVNESE (71 aa). Disordered regions lie at residues 1 to 99, 159 to 179, and 194 to 231; these read MPQL…RDYF, ATVK…VPVV, and YSND…SPYY. Positions 64 to 78 are enriched in low complexity; the sequence is SSLVNESENQSSSSD. Residues 80–99 are compositionally biased toward basic and acidic residues; sequence EAERRPQPARDAFQKPRDYF. Residues 342–410 constitute a DNA-binding region (HMG box); the sequence is VKKPLNAFML…LHAQLYPTWS (69 aa). Positions 412–501 are disordered; sequence RDNYGKKKKR…HSEQAQPLSL (90 aa). Positions 417-423 match the Nuclear localization signal motif; sequence KKKKRKR. Composition is skewed to low complexity over residues 427–437 and 470–491; these read LSQTQSQQQIQ and SALD…PAAT. Residues 492–501 show a composition bias toward polar residues; it reads HSEQAQPLSL.

The protein belongs to the TCF/LEF family. In terms of assembly, binds the armadillo repeat of CTNNB1 and forms a stable complex. Interacts with DAZAP2. In terms of tissue distribution, detected in the basal layer of epidermis and in outer root sheath and bulge of hair follicles.

It is found in the nucleus. Participates in the Wnt signaling pathway. Binds to DNA and acts as a repressor in the absence of CTNNB1, and as an activator in its presence. Necessary for the terminal differentiation of epidermal cells, the formation of keratohyalin granules and the development of the barrier function of the epidermis. This Mus musculus (Mouse) protein is Transcription factor 7-like 1 (Tcf7l1).